The primary structure comprises 407 residues: tRNA N6-adenosine threonylcarbamoyltransferase, mitochondrial (407 aa).

Residues 1–30 (MISIKGTGRFLLDNYRIWQRRAFNRPIQLR) constitute a mitochondrion transit peptide. Residues His-145 and His-149 each contribute to the a divalent metal cation site. Substrate-binding positions include 170–174 (LVSGG), Asp-203, Ala-217, Glu-221, 328–329 (SN), and Ser-360. Residue Asp-361 participates in a divalent metal cation binding.

Belongs to the KAE1 / TsaD family. In terms of assembly, homodimer. The cofactor is a divalent metal cation.

It is found in the mitochondrion. The enzyme catalyses L-threonylcarbamoyladenylate + adenosine(37) in tRNA = N(6)-L-threonylcarbamoyladenosine(37) in tRNA + AMP + H(+). Required for the formation of a threonylcarbamoyl group on adenosine at position 37 (t(6)A37) in mitochondrial tRNAs that read codons beginning with adenine. Probably involved in the transfer of the threonylcarbamoyl moiety of threonylcarbamoyl-AMP (TC-AMP) to the N6 group of A37. Involved in mitochondrial genome maintenance. In Saccharomyces cerevisiae (strain ATCC 204508 / S288c) (Baker's yeast), this protein is tRNA N6-adenosine threonylcarbamoyltransferase, mitochondrial (QRI7).